Here is a 792-residue protein sequence, read N- to C-terminus: MLLSRKLLNTLFPIFNKVSNQELETMLNSIGVEVENIIKFPRTENLIVGEIKKVEKHPNADKLNICEVFFENKIHVIICGAQNVRPGLKVIVAKVGTKMLDGRLIEAKDLLGVKSNGMICAYAELTTKTDVCSYDEIENIIELDNDAKLNDIDPLKYIGLDDEILDLSVPSNRNELNGVIPIAYDLISLYFPKSKIDFSLKNIENQKKTSIKINIDKELCRFFGVIDVSNVEIKTSNWKIKSFLLNCGITPINTIVDITNLNAIITSVPCHAYDKDKLGKEIAVSLNAHKEKFLALNDKEYVVENKSAVSVISNNKIVSLASVIGSKENSISNSTKNVLFEIGNFDNMAIRDASNKLGIKTNASTLGSKTIPLWITYKSFDYLIGLLKDLNIKVSSVNYVGDKLKDNLIDFDSQTIQDLLGQKTDVEKNLKLMGFNFVGKKVKAPVYREDLENISDLVEELTKKINVNNLELKPIESSFVDFEFDNFEENWNFLEKYFINKGFTLVKTLNLTSLENNKAFNLFGSKKSIKIMNPISSEREYFRNNLIQQHLEVLSNNYAHKINLYNIFEIQGLNYDGLWNKHLCLTLPIEHFNNKINNSKIVIDLLFIKSILTDLFNVFNIPFEIKAIENLSNDIEFISTNNGFEIYVKNKLIGIASQISPEILNKYKLDSSKPIYFVELIINDLLDSKISKSITVSDEKKEHNIARSITLSLDRNQNYKKIESVLDNYKNNLNLLDKFEIESVFIKDNKPSYTFSLEINPSKLNKKETNEINEIVERLIKDLINEGAEIKR.

Residues Phe-40–Lys-156 enclose the tRNA-binding domain. Residues Leu-404–Leu-472 enclose the B5 domain. Residues Asp-450, Asp-456, Glu-459, and Glu-460 each coordinate Mg(2+).

This sequence belongs to the phenylalanyl-tRNA synthetase beta subunit family. Type 1 subfamily. As to quaternary structure, tetramer of two alpha and two beta subunits. Mg(2+) is required as a cofactor.

The protein localises to the cytoplasm. It carries out the reaction tRNA(Phe) + L-phenylalanine + ATP = L-phenylalanyl-tRNA(Phe) + AMP + diphosphate + H(+). The protein is Phenylalanine--tRNA ligase beta subunit of Malacoplasma penetrans (strain HF-2) (Mycoplasma penetrans).